Reading from the N-terminus, the 91-residue chain is Elongation factor 1-beta (91 aa).

This sequence belongs to the EF-1-beta/EF-1-delta family.

Functionally, promotes the exchange of GDP for GTP in EF-1-alpha/GDP, thus allowing the regeneration of EF-1-alpha/GTP that could then be used to form the ternary complex EF-1-alpha/GTP/AAtRNA. The sequence is that of Elongation factor 1-beta from Saccharolobus islandicus (strain Y.N.15.51 / Yellowstone #2) (Sulfolobus islandicus).